The following is a 793-amino-acid chain: Facilitated trehalose transporter Tret1 (793 aa).

Over 1–326 (MNRKVGPVLE…LEVYRPTTNP (326 aa)) the chain is Cytoplasmic. Disordered regions lie at residues 99–148 (EKAK…EHKS) and 213–235 (RHIS…FEPS). Residues 104 to 113 (KSSLKSSRVS) show a composition bias toward low complexity. Positions 115–125 (DQEDDRFDEDE) are enriched in acidic residues. Positions 213–223 (RHISFKFDKEP) are enriched in basic and acidic residues. The chain crosses the membrane as a helical span at residues 327 to 347 (IYIWTQVLAALSVSLGSMVVG). Residues 348-376 (FSSAYTSPALVSMKDRNITSFEVTDQSGS) are Extracellular-facing. N364 is a glycosylation site (N-linked (GlcNAc...) asparagine). The helical transmembrane segment at 377–397 (WVGGIMPLAGLAGGILGGPMI) threads the bilayer. The Cytoplasmic portion of the chain corresponds to 398–411 (EYLGRKNTILATAT). Residues 412 to 432 (PFIISWLLIGCATHVAMVLVG) traverse the membrane as a helical segment. The Extracellular portion of the chain corresponds to 433–434 (RA). The helical transmembrane segment at 435 to 455 (LSGLCVGIASLSLPVYLGETV) threads the bilayer. The Cytoplasmic segment spans residues 456–460 (QPEVR). A helical transmembrane segment spans residues 461–481 (GTLGLLPTAFGNIGILLCFVA). Residues 482 to 488 (GKYLDWS) are Extracellular-facing. Residues 489–509 (GLAFLGAALPIPFLLLMFLIP) traverse the membrane as a helical segment. The Cytoplasmic portion of the chain corresponds to 510–572 (ETPRWYVSRN…DLLNKANLKP (63 aa)). The helical transmembrane segment at 573-593 (LLISLGLMFFQQLSGINAVIF) threads the bilayer. Topologically, residues 594 to 609 (YTVQIFQSAGSTIDEK) are extracellular. The chain crosses the membrane as a helical span at residues 610 to 630 (LCTIIVGVVNFIATFIATVLI). Topologically, residues 631 to 636 (DRLGRK) are cytoplasmic. Residues 637–657 (ILLYISDVAMIITLMTLGTFF) form a helical membrane-spanning segment. Topologically, residues 658–668 (YMKNNGDDVSE) are extracellular. A helical transmembrane segment spans residues 669–689 (IGWLPLAAFVVFVVGFSLGFG). Over 690–703 (PIPWLMMGEILPGK) the chain is Cytoplasmic. A helical transmembrane segment spans residues 704–724 (IRGSAASVATAFNWSCTFVVT). The Extracellular portion of the chain corresponds to 725–737 (KTFADITASIGNH). A helical membrane pass occupies residues 738–758 (GAFWMFGSICIVGLLFVIVYV). The Cytoplasmic segment spans residues 759 to 793 (PETQGKSLEDIERKMMGRVRRMSSVANIKPLSFNM).

This sequence belongs to the major facilitator superfamily. Sugar transporter (TC 2.A.1.1) family. Trehalose transporter subfamily.

The protein resides in the cell membrane. Functionally, high-capacity facilitative transporter for trehalose. Does not transport maltose, sucrose or lactose. Mediates the bidirectional transfer of trehalose. Responsible for the transport of trehalose synthesized in the fat body and the incorporation of trehalose into other tissues that require a carbon source, thereby regulating trehalose levels in the hemolymph. This is Facilitated trehalose transporter Tret1 from Anopheles gambiae (African malaria mosquito).